The primary structure comprises 284 residues: uncharacterized protein (284 aa).

Residues 1–27 show a composition bias toward polar residues; it reads MSNLPTSTPVSPSNLAEENPKSNNPES. Disordered regions lie at residues 1 to 29 and 248 to 284; these read MSNLPTSTPVSPSNLAEENPKSNNPESSE and TRDSKRQQKKGKTTTVARSTNKKNKSMMGTVKDLKKK.

This is an uncharacterized protein from Caenorhabditis elegans.